The primary structure comprises 138 residues: Large ribosomal subunit protein uL16 (138 aa).

The span at 1-17 (MLIPRKVKHRKQHHPRQ) shows a compositional bias: basic residues. The tract at residues 1-22 (MLIPRKVKHRKQHHPRQRGIAS) is disordered.

Belongs to the universal ribosomal protein uL16 family. As to quaternary structure, part of the 50S ribosomal subunit.

Binds 23S rRNA and is also seen to make contacts with the A and possibly P site tRNAs. This chain is Large ribosomal subunit protein uL16, found in Mycobacterium avium (strain 104).